Reading from the N-terminus, the 256-residue chain is Zinc metalloprotease (256 aa).

Histidine 74 serves as the catalytic Proton donor.

The protein belongs to the peptidase M4 family. Zn(2+) is required as a cofactor.

It localises to the secreted. Its function is as follows. May play a role in ulcer formation. Proteolytic digestion of gastric mucus has been suggested as an important mechanism by which its pathogenicity is at least partly exerted. In Helicobacter pylori (Campylobacter pylori), this protein is Zinc metalloprotease (hap).